The chain runs to 304 residues: MKTAVLLLSYGSPEKMSDIDEYLSKIFGGKPVPKGVAEENYRKYEMFGGLSPSNRIIQSIRDRLQKRFDQSGDVDVFTAFKHWYPSIGEVVPDLKGYDNIVSIPLFSFFSENVKASYYKPLAEALEKNDIRTKMEFVNGISNYDLFIPMWIHLIEEKEKGDSFYLFDAHSLPHPENEEDYLFWLRYSTYKITQIMGLRSSDFGFQGGHEGWLGPSIYNVYRKAKEKKIIAVPISFLYDHLEILYDLDYEFRKKIEEDGYSYERVPMPNDSAIFITLLERIVSSSITHLSGELIGNGKEKSENFI.

Residues His169 and Glu241 each contribute to the Fe cation site.

Belongs to the ferrochelatase family.

It localises to the cytoplasm. It carries out the reaction heme b + 2 H(+) = protoporphyrin IX + Fe(2+). Its pathway is porphyrin-containing compound metabolism; protoheme biosynthesis; protoheme from protoporphyrin-IX: step 1/1. Catalyzes the ferrous insertion into protoporphyrin IX. In Thermoplasma volcanium (strain ATCC 51530 / DSM 4299 / JCM 9571 / NBRC 15438 / GSS1), this protein is Ferrochelatase.